A 340-amino-acid chain; its full sequence is MNNRFLDACWGKPVDRTPVWLMRQAGRYLPEYMAVRSRCSFLELCKTPELAAEVTIQPVDILGVDAAILFSDILTPVEPMGLKLDFVPGPVFENPVRTMADVEKLRIPDPEADVPYVLQAIRILRKELAGKVPLIGFGGAPFTLACYMVEGKGSKDWATIKRMMYAAPDVYAALMEKVTMMDMEYLNAQIRAGAQAIQIFDTWGGVLSPTDYEKYVLPYTTKLINGLNRKETPVIHFVKGSGTMLPVVQKAGGDVMGLDWHINLGSARDILGPEMAVQGNLDPTTLYAPHAVIEQEVKRVLNENAGRPGHIFNLGHGILPTVPPENAKFMVDCVHRLSQR.

Substrate contacts are provided by residues 23–27, D72, Y147, T202, and H316; that span reads RQAGR.

This sequence belongs to the uroporphyrinogen decarboxylase family. Homodimer.

The protein localises to the cytoplasm. It catalyses the reaction uroporphyrinogen III + 4 H(+) = coproporphyrinogen III + 4 CO2. It participates in porphyrin-containing compound metabolism; protoporphyrin-IX biosynthesis; coproporphyrinogen-III from 5-aminolevulinate: step 4/4. Its function is as follows. Catalyzes the decarboxylation of four acetate groups of uroporphyrinogen-III to yield coproporphyrinogen-III. This chain is Uroporphyrinogen decarboxylase, found in Trichlorobacter lovleyi (strain ATCC BAA-1151 / DSM 17278 / SZ) (Geobacter lovleyi).